Consider the following 485-residue polypeptide: MGNEVRVRYAPSPTGHLHIGNARTALFNYLFARSQGGKFIIRIEDTDRKRNIEGGEQSQLNYLKWLGIDWDESVDVGGEYGPYRQSERNDIYKTYYEELLEKGLAYKCYCTEEELEKEREEQAARGEMPRYSGKCRNLTKEEQEKLEAEGRQPSIRFKVPQGEVIRFDDIVKGEISFETDGIGDFVIVKKDGTPTYNFAVAVDDYLMKMTHVLRGEDHISNTPKQIMIYNALGWDIPAFGHMTLIVNESRKKLSKRDESIIQFIEQYEELGYLPEALFNFITLLGWSPVGEEELFTKEQFIEIFDVNRLSKSPAVFDTHKLKWVNNQYVKKLDLDQVIELTVPHLQKAGKVSEELSGSEQEWVRKLISLYQEQLSYGAEIVELTELFFKDDIQYNREARTVLEEEQVPEVLRVFAEKLEQLDSFTADEIKASIKAVQKETGHKGKKLFMPIRVATTGQTHGPELPQSIELLGKDTVLKRLHNIIQ.

The short motif at 11-21 (PSPTGHLHIGN) is the 'HIGH' region element. The short motif at 252–256 (KLSKR) is the 'KMSKS' region element. K255 is an ATP binding site.

It belongs to the class-I aminoacyl-tRNA synthetase family. Glutamate--tRNA ligase type 1 subfamily. Monomer.

The protein localises to the cytoplasm. It carries out the reaction tRNA(Glu) + L-glutamate + ATP = L-glutamyl-tRNA(Glu) + AMP + diphosphate. Its function is as follows. Catalyzes the attachment of glutamate to tRNA(Glu) in a two-step reaction: glutamate is first activated by ATP to form Glu-AMP and then transferred to the acceptor end of tRNA(Glu). This Bacillus licheniformis (strain ATCC 14580 / DSM 13 / JCM 2505 / CCUG 7422 / NBRC 12200 / NCIMB 9375 / NCTC 10341 / NRRL NRS-1264 / Gibson 46) protein is Glutamate--tRNA ligase.